Reading from the N-terminus, the 638-residue chain is Exocyst complex component EXO70A1 (638 aa).

The tract at residues 163–190 (FDGLPNSLRPSSDGDGGGKPHGGHHNDD) is disordered.

This sequence belongs to the EXO70 family. The exocyst complex is composed of SEC3, SEC5, SEC6, SEC8, SEC10, EXO70A1 and EXO84B. Interacts with SEC3A and EXO84B. Co-localizes with FPP3/VETH1, FPP2/VETH2 and COG2 in vesicle-like small motile compartments. May interact with COG2.

It localises to the cytoplasm. The protein resides in the cytosol. The protein localises to the cytoskeleton. Its subcellular location is the phragmoplast. It is found in the cell membrane. It localises to the secreted. The protein resides in the cell wall. In terms of biological role, component of the exocyst complex involved in the docking of exocytic vesicles with fusion sites on the plasma membrane during regulated or polarized secretion. Involved in polarized cell growth and organ morphogenesis. Involved in polarized cell growth and organ morphogenesis. During cytokinesis, involved in cell plate initiation, cell plate maturation and formation of new primary cell wall. Participates in polarized pectin delivery required for the polarized development of the mucilage-producing volcano cells of the seed coat. Involved in the recycling and localization of auxin efflux carriers PIN1 and PIN2, and thus in polar auxin transport regulation. Functions in vesicle trafficking in tracheary elements to regulate patterned secondary cell wall (SCW) thickening. This Arabidopsis thaliana (Mouse-ear cress) protein is Exocyst complex component EXO70A1.